Reading from the N-terminus, the 266-residue chain is Glucosamine-6-phosphate deaminase (266 aa).

The active-site Proton acceptor; for enolization step is Asp-72. Asp-141 functions as the For ring-opening step in the catalytic mechanism. His-143 serves as the catalytic Proton acceptor; for ring-opening step. The active-site For ring-opening step is the Glu-148.

Belongs to the glucosamine/galactosamine-6-phosphate isomerase family. NagB subfamily. In terms of assembly, homohexamer.

It catalyses the reaction alpha-D-glucosamine 6-phosphate + H2O = beta-D-fructose 6-phosphate + NH4(+). It functions in the pathway amino-sugar metabolism; N-acetylneuraminate degradation; D-fructose 6-phosphate from N-acetylneuraminate: step 5/5. With respect to regulation, allosterically activated by N-acetylglucosamine 6-phosphate (GlcNAc6P). Functionally, catalyzes the reversible isomerization-deamination of glucosamine 6-phosphate (GlcN6P) to form fructose 6-phosphate (Fru6P) and ammonium ion. The chain is Glucosamine-6-phosphate deaminase from Serratia proteamaculans (strain 568).